The chain runs to 218 residues: Capsid protein (218 aa).

Position 1 is an N-acetylmethionine; by host (methionine 1). The tract at residues 1–28 (MDKSESTSAGRNRRRRPRRGSRSAPSSA) is disordered. The segment covering 11–21 (RNRRRRPRRGS) has biased composition (basic residues).

Belongs to the cucumovirus capsid protein family.

Its subcellular location is the virion. Functionally, capsid protein. Probably binds RNA and plays a role in packaging. The chain is Capsid protein from Cucumis sativus (Cucumber).